Reading from the N-terminus, the 111-residue chain is uncharacterized protein (111 aa).

The protein to B.subtilis XkdW.

This is an uncharacterized protein from Bacillus subtilis (strain 168).